We begin with the raw amino-acid sequence, 278 residues long: uncharacterized protein (278 aa).

Residues 251–278 form a disordered region; it reads TLSENKKQKSSSTSPETDSDMSEFFGDN.

This is an uncharacterized protein from Aedes pseudoscutellaris reovirus (isolate France) (ApRV).